The sequence spans 168 residues: Transcription antitermination protein NusB (168 aa).

This sequence belongs to the NusB family.

Its function is as follows. Involved in transcription antitermination. Required for transcription of ribosomal RNA (rRNA) genes. Binds specifically to the boxA antiterminator sequence of the ribosomal RNA (rrn) operons. The polypeptide is Transcription antitermination protein NusB (Chlamydia trachomatis serovar D (strain ATCC VR-885 / DSM 19411 / UW-3/Cx)).